Consider the following 559-residue polypeptide: 2-isopropylmalate synthase (559 aa).

In terms of domain architecture, Pyruvate carboxyltransferase spans 33-307 (PIWCSSDLRD…DPQLDFSDID (275 aa)). Residues Asp42, His246, His248, and Asn282 each contribute to the Mg(2+) site. Residues 439 to 559 (ANTPYALVSH…SLSQQEAKAA (121 aa)) form a regulatory domain region.

Belongs to the alpha-IPM synthase/homocitrate synthase family. LeuA type 2 subfamily. Homodimer. It depends on Mg(2+) as a cofactor.

It localises to the cytoplasm. It catalyses the reaction 3-methyl-2-oxobutanoate + acetyl-CoA + H2O = (2S)-2-isopropylmalate + CoA + H(+). The protein operates within amino-acid biosynthesis; L-leucine biosynthesis; L-leucine from 3-methyl-2-oxobutanoate: step 1/4. Functionally, catalyzes the condensation of the acetyl group of acetyl-CoA with 3-methyl-2-oxobutanoate (2-ketoisovalerate) to form 3-carboxy-3-hydroxy-4-methylpentanoate (2-isopropylmalate). The chain is 2-isopropylmalate synthase from Pseudomonas fluorescens (strain SBW25).